A 198-amino-acid polypeptide reads, in one-letter code: Prostamide/prostaglandin F synthase (198 aa).

Phosphotyrosine is present on Tyr108.

This sequence belongs to the peroxiredoxin-like PRXL2 family. Prostamide/prostaglandin F synthase subfamily.

Its subcellular location is the cytoplasm. It localises to the cytosol. It catalyses the reaction prostaglandin H2 + [thioredoxin]-dithiol = prostaglandin F2alpha + [thioredoxin]-disulfide. The catalysed reaction is prostamide F2alpha + [thioredoxin]-disulfide = prostamide H2 + [thioredoxin]-dithiol. In terms of biological role, catalyzes the reduction of prostaglandin-ethanolamide H(2) (prostamide H(2)) to prostamide F(2alpha) with NADPH as proton donor. Also able to reduce prostaglandin H(2) to prostaglandin F(2alpha). The sequence is that of Prostamide/prostaglandin F synthase (PRXL2B) from Pongo abelii (Sumatran orangutan).